The chain runs to 376 residues: Geranylgeranyl transferase type-1 subunit beta (376 aa).

PFTB repeat units lie at residues 128 to 179, 192 to 231, 259 to 301, and 310 to 353; these read KRSL…YICG, TEKLLGYIMSQQCYNGAFGAHNEPHSGYTSCALSTLALLS, MKFE…HLLT, and TELV…ALIE. Residues 216–218 and 280–283 contribute to the geranylgeranyl diphosphate site; these read HSG and RENK. D286 and C288 together coordinate Zn(2+). A geranylgeranyl diphosphate-binding site is contributed by 289 to 292; the sequence is YAFW. Zn(2+) is bound at residue H341.

Belongs to the protein prenyltransferase subunit beta family. In terms of assembly, heterodimer of an alpha (RAM2) and a beta (CDC43) subunit. Requires Zn(2+) as cofactor. Mg(2+) serves as cofactor.

It is found in the cytoplasm. It catalyses the reaction geranylgeranyl diphosphate + L-cysteinyl-[protein] = S-geranylgeranyl-L-cysteinyl-[protein] + diphosphate. Its function is as follows. Catalyzes the transfer of a geranyl-geranyl moiety from geranyl-geranyl diphosphate to proteins having the C-terminal sequence Cys-Ile-Ile-Leu or Cys-Val-Leu-Leu. Acts, among other substrates, on Rho1 and Rho2 and CDC42 proteins. Participates in a RAS-like C-terminal modification of proteins involved in nuclear division and bud growth. It is involved in bud positioning and cell polarity. The beta subunit is responsible for isoprenoid and peptide-binding. This Saccharomyces cerevisiae (strain ATCC 204508 / S288c) (Baker's yeast) protein is Geranylgeranyl transferase type-1 subunit beta (CDC43).